The following is a 367-amino-acid chain: DNA replication and repair protein RecF (367 aa).

Position 30–37 (30–37 (GDNAQGKT)) interacts with ATP.

It belongs to the RecF family.

The protein resides in the cytoplasm. Its function is as follows. The RecF protein is involved in DNA metabolism; it is required for DNA replication and normal SOS inducibility. RecF binds preferentially to single-stranded, linear DNA. It also seems to bind ATP. This is DNA replication and repair protein RecF from Clostridium beijerinckii (strain ATCC 51743 / NCIMB 8052) (Clostridium acetobutylicum).